A 255-amino-acid polypeptide reads, in one-letter code: Ribosomal RNA small subunit methyltransferase A (255 aa).

6 residues coordinate S-adenosyl-L-methionine: Asn12, Leu14, Gly39, Glu60, Asp84, and Asn106.

The protein belongs to the class I-like SAM-binding methyltransferase superfamily. rRNA adenine N(6)-methyltransferase family. RsmA subfamily.

Its subcellular location is the cytoplasm. The enzyme catalyses adenosine(1518)/adenosine(1519) in 16S rRNA + 4 S-adenosyl-L-methionine = N(6)-dimethyladenosine(1518)/N(6)-dimethyladenosine(1519) in 16S rRNA + 4 S-adenosyl-L-homocysteine + 4 H(+). In terms of biological role, specifically dimethylates two adjacent adenosines (A1518 and A1519) in the loop of a conserved hairpin near the 3'-end of 16S rRNA in the 30S particle. May play a critical role in biogenesis of 30S subunits. The protein is Ribosomal RNA small subunit methyltransferase A of Herminiimonas arsenicoxydans.